The primary structure comprises 377 residues: Peroxisomal membrane protein PEX14 (377 aa).

Positions 1–20 are enriched in low complexity; that stretch reads MASSEQAEQPSQPSSSPGSE. Residues 1-23 form a disordered region; the sequence is MASSEQAEQPSQPSSSPGSENVV. At alanine 2 the chain carries N-acetylalanine. Residues 2–108 are Peroxisomal-facing; the sequence is ASSEQAEQPS…CSPGSSRWRD (107 aa). Lysine 34 is subject to N6-acetyllysine. The chain crosses the membrane as a helical span at residues 109 to 126; sequence YGALAIIMAGIAFGFHQL. Topologically, residues 127-377 are cytoplasmic; sequence YKKYLLPLIL…EGASNESERH (251 aa). The segment at 230 to 377 is disordered; that stretch reads PPSPSAPKIP…EGASNESERH (148 aa). Serine 232 carries the post-translational modification Phosphoserine. Composition is skewed to low complexity over residues 244-259 and 265-275; these read PVKS…VNHH and SPVSNESTSSS. Phosphoserine occurs at positions 282 and 335. Over residues 323–342 the composition is skewed to acidic residues; it reads KEEEEEEEEEDVSHVDEEDV. Residues 360–377 show a composition bias toward basic and acidic residues; that stretch reads QVDKLRRPEGASNESERH.

It belongs to the peroxin-14 family. In terms of assembly, interacts with PEX13; forming the PEX13-PEX14 docking complex. Interacts with PEX5 (via WxxxF/Y motifs). Interacts with PEX19. Interacts with tubulin.

It localises to the peroxisome membrane. Functionally, component of the PEX13-PEX14 docking complex, a translocon channel that specifically mediates the import of peroxisomal cargo proteins bound to PEX5 receptor. The PEX13-PEX14 docking complex forms a large import pore which can be opened to a diameter of about 9 nm. Mechanistically, PEX5 receptor along with cargo proteins associates with the PEX14 subunit of the PEX13-PEX14 docking complex in the cytosol, leading to the insertion of the receptor into the organelle membrane with the concomitant translocation of the cargo into the peroxisome matrix. Plays a key role for peroxisome movement through a direct interaction with tubulin. This Cricetulus longicaudatus (Long-tailed dwarf hamster) protein is Peroxisomal membrane protein PEX14.